We begin with the raw amino-acid sequence, 463 residues long: Glutamate--tRNA ligase (463 aa).

Residues 10 to 20 (PSPTGHLHIGG) carry the 'HIGH' region motif. The short motif at 236–240 (KLSKR) is the 'KMSKS' region element. Lys239 contacts ATP.

This sequence belongs to the class-I aminoacyl-tRNA synthetase family. Glutamate--tRNA ligase type 1 subfamily. In terms of assembly, monomer.

The protein localises to the cytoplasm. The catalysed reaction is tRNA(Glu) + L-glutamate + ATP = L-glutamyl-tRNA(Glu) + AMP + diphosphate. Catalyzes the attachment of glutamate to tRNA(Glu) in a two-step reaction: glutamate is first activated by ATP to form Glu-AMP and then transferred to the acceptor end of tRNA(Glu). This is Glutamate--tRNA ligase from Nitratidesulfovibrio vulgaris (strain ATCC 29579 / DSM 644 / CCUG 34227 / NCIMB 8303 / VKM B-1760 / Hildenborough) (Desulfovibrio vulgaris).